The following is a 358-amino-acid chain: MLYNLLYPLSSDITVFNVFRYITFRSAWALATALLVSIVVGPRFIAWLQRLKCRQFIHEDVTCHMSKAGTPTMGGLLIGFAVTFSVLLWADLRNPYIWLTLLVFTGFGFIGFLDDYTKLRRRNNKGLTASAKFLWQVGVAVAAMYLLVQLPAYSTKLAFPFFKGLTPDLGWLYIPFAVAVMVGSSNGVNLTDGLDGLAIGPTIVAGIVFSIFIYVAGHSQIAGYLQVPYVPGVGEVAVFCGALVGAGLGFLWFNAYPAQVFMGDVGSLSLGGTLGFLAVLCKQELLLLVVGGLFVVETLSVILQVGYFKFSGGKRIFRMAPLHHHFELQGIPESKIIIRFWITSALLGLIALSVLKLR.

The next 10 membrane-spanning stretches (helical) occupy residues 28–48 (WALATALLVSIVVGPRFIAWL), 72–92 (TMGGLLIGFAVTFSVLLWADL), 96–116 (YIWLTLLVFTGFGFIGFLDDY), 133–153 (FLWQVGVAVAAMYLLVQLPAY), 164–184 (GLTPDLGWLYIPFAVAVMVGS), 196–216 (GLAIGPTIVAGIVFSIFIYVA), 233–253 (VGEVAVFCGALVGAGLGFLWF), 260–280 (VFMGDVGSLSLGGTLGFLAVL), 285–305 (LLLLVVGGLFVVETLSVILQV), and 335–355 (KIIIRFWITSALLGLIALSVL).

This sequence belongs to the glycosyltransferase 4 family. MraY subfamily. Mg(2+) is required as a cofactor.

The protein localises to the cell inner membrane. It catalyses the reaction UDP-N-acetyl-alpha-D-muramoyl-L-alanyl-gamma-D-glutamyl-meso-2,6-diaminopimeloyl-D-alanyl-D-alanine + di-trans,octa-cis-undecaprenyl phosphate = di-trans,octa-cis-undecaprenyl diphospho-N-acetyl-alpha-D-muramoyl-L-alanyl-D-glutamyl-meso-2,6-diaminopimeloyl-D-alanyl-D-alanine + UMP. It participates in cell wall biogenesis; peptidoglycan biosynthesis. Catalyzes the initial step of the lipid cycle reactions in the biosynthesis of the cell wall peptidoglycan: transfers peptidoglycan precursor phospho-MurNAc-pentapeptide from UDP-MurNAc-pentapeptide onto the lipid carrier undecaprenyl phosphate, yielding undecaprenyl-pyrophosphoryl-MurNAc-pentapeptide, known as lipid I. This is Phospho-N-acetylmuramoyl-pentapeptide-transferase from Nitratidesulfovibrio vulgaris (strain ATCC 29579 / DSM 644 / CCUG 34227 / NCIMB 8303 / VKM B-1760 / Hildenborough) (Desulfovibrio vulgaris).